A 249-amino-acid polypeptide reads, in one-letter code: Adenosylcobinamide-GDP ribazoletransferase (249 aa).

The next 7 membrane-spanning stretches (helical) occupy residues 29 to 49 (LYWF…CAWL), 50 to 70 (PLSI…GFIV), 104 to 124 (VGSF…VAIL), 131 to 151 (AFAL…LLAA), 165 to 185 (GFVG…SLMM), 194 to 214 (PFLL…IGFL), and 226 to 246 (VLGA…GVAF).

Belongs to the CobS family. Mg(2+) is required as a cofactor.

It localises to the cell inner membrane. It catalyses the reaction alpha-ribazole + adenosylcob(III)inamide-GDP = adenosylcob(III)alamin + GMP + H(+). It carries out the reaction alpha-ribazole 5'-phosphate + adenosylcob(III)inamide-GDP = adenosylcob(III)alamin 5'-phosphate + GMP + H(+). It participates in cofactor biosynthesis; adenosylcobalamin biosynthesis; adenosylcobalamin from cob(II)yrinate a,c-diamide: step 7/7. Its function is as follows. Joins adenosylcobinamide-GDP and alpha-ribazole to generate adenosylcobalamin (Ado-cobalamin). Also synthesizes adenosylcobalamin 5'-phosphate from adenosylcobinamide-GDP and alpha-ribazole 5'-phosphate. The sequence is that of Adenosylcobinamide-GDP ribazoletransferase from Chlorobium phaeovibrioides (strain DSM 265 / 1930) (Prosthecochloris vibrioformis (strain DSM 265)).